The sequence spans 510 residues: GMP synthase [glutamine-hydrolyzing] (510 aa).

Residues 5–194 (DILVLDFGSQ…FAKICGCEST (190 aa)) enclose the Glutamine amidotransferase type-1 domain. Cysteine 82 (nucleophile) is an active-site residue. Active-site residues include histidine 169 and glutamate 171. Residues 195–385 (WNMGSFAKKE…LGLSRDIVYR (191 aa)) form the GMPS ATP-PPase domain. 222–228 (SGGVDSS) is an ATP binding site.

As to quaternary structure, homodimer.

The catalysed reaction is XMP + L-glutamine + ATP + H2O = GMP + L-glutamate + AMP + diphosphate + 2 H(+). It participates in purine metabolism; GMP biosynthesis; GMP from XMP (L-Gln route): step 1/1. Catalyzes the synthesis of GMP from XMP. The chain is GMP synthase [glutamine-hydrolyzing] from Campylobacter fetus subsp. fetus (strain 82-40).